The chain runs to 520 residues: MAEVKLGMKTQVPASVESQKPRSKKAPDFPIVEKQNWLIHLHYIRKDYEACKAVIKEQLQETQGLCEYAIYVQALIFRLEGNIQESLELFQTCAVLSPQCADNLKQVARSLFLLGKHKAATEVYNEAAKLNQKDWEICHNLGVCYTYLKQFNKAQDQLHSALQLNKHDLTYIMLGKIHLLQGDLDKAIEIYKKAVEFSPENTELLTTLGLLYLQLGVYQKAFEHLGNALTYDPANYKAILAAGSMMQTHGDFDVALTKYRVVACAIPESPPLWNNIGMCFFGKKKYVAAISCLKRANYLAPFDWKILYNLGLVHLTMQQYASAFHFLSAAINFQPKMGELYMLLAVALTNLEDIENARRAYVEAVRLDKCNPLVNLNYAVLLYNQGEKKSALAQYQEMEKKVNFLKDNSPLEFDSEMVEMAQKLGAALQVGEALVWTKPVKDPKTKHRTNSGSKSATLQQPLGSIQALGQAMSSAAAYRKILSGAVGAQLPKPPSLPLEPEPEPTVEASPTEASEQKKEK.

Positions 1 to 26 are disordered; that stretch reads MAEVKLGMKTQVPASVESQKPRSKKA. Residues 1–66 form a required for localization to centrosomes region; sequence MAEVKLGMKT…EQLQETQGLC (66 aa). TPR repeat units lie at residues 67–100, 102–134, 135–167, 168–201, 203–235, 237–269, 270–303, 304–337, 339–371, and 373–408; these read EYAI…SPQC, DNLK…NQKD, WEIC…LNKH, DLTY…SPEN, ELLT…DPAN, KAIL…IPES, PPLW…APFD, WKIL…QPKM, ELYM…DKCN, and LVNL…LKDN. Residues 101-337 are interaction with PCM1; the sequence is ADNLKQVARS…SAAINFQPKM (237 aa). The segment at 338–520 is required for localization to centrosomes; sequence GELYMLLAVA…TEASEQKKEK (183 aa). Residues 488 to 520 form a disordered region; that stretch reads AQLPKPPSLPLEPEPEPTVEASPTEASEQKKEK.

Belongs to the BBS4 family. As to quaternary structure, part of BBSome complex, that contains BBS1, BBS2, BBS4, BBS5, BBS7, BBS8/TTC8, BBS9 and BBIP10. Interacts with PCM1 and DCTN1. Interacts with DC28B. Interacts with ALDOB and C2CD3. Interacts with PKD1. Interacts with CEP290. Interacts with DLEC1. Expressed in the hippocampus and dentate gyrus, the columnar epithelial cells of bronchioles, the olfactory epithelium and the inner segment and outer nuclear layer of the retina. Expressed in testis.

It localises to the cytoplasm. It is found in the cytoskeleton. The protein resides in the microtubule organizing center. The protein localises to the centrosome. Its subcellular location is the cell projection. It localises to the cilium membrane. It is found in the centriolar satellite. The protein resides in the cilium. The protein localises to the flagellum. The BBSome complex is thought to function as a coat complex required for sorting of specific membrane proteins to the primary cilia. The BBSome complex is required for ciliogenesis but is dispensable for centriolar satellite function. This ciliogenic function is mediated in part by the Rab8 GDP/GTP exchange factor, which localizes to the basal body and contacts the BBSome. Rab8(GTP) enters the primary cilium and promotes extension of the ciliary membrane. Firstly the BBSome associates with the ciliary membrane and binds to RAB3IP/Rabin8, the guanosyl exchange factor (GEF) for Rab8 and then the Rab8-GTP localizes to the cilium and promotes docking and fusion of carrier vesicles to the base of the ciliary membrane. The BBSome complex, together with the LTZL1, controls SMO ciliary trafficking and contributes to the sonic hedgehog (SHH) pathway regulation. Required for proper BBSome complex assembly and its ciliary localization. Required for microtubule anchoring at the centrosome but not for microtubule nucleation. May be required for the dynein-mediated transport of pericentriolar proteins to the centrosome. The polypeptide is BBSome complex member BBS4 (Bbs4) (Mus musculus (Mouse)).